A 308-amino-acid polypeptide reads, in one-letter code: Protein translocase subunit SecF (308 aa).

The next 6 helical transmembrane spans lie at 28–48 (SIIL…NFGI), 140–160 (IEAG…YIWV), 164–184 (WYFG…ALGF), 194–214 (LSTI…SVVI), 246–266 (ILTV…GGEA), and 272–292 (ILVF…SAPI).

The protein belongs to the SecD/SecF family. SecF subfamily. As to quaternary structure, forms a complex with SecD. Part of the essential Sec protein translocation apparatus which comprises SecA, SecYEG and auxiliary proteins SecDF-YajC and YidC.

It is found in the cell inner membrane. Its function is as follows. Part of the Sec protein translocase complex. Interacts with the SecYEG preprotein conducting channel. SecDF uses the proton motive force (PMF) to complete protein translocation after the ATP-dependent function of SecA. The chain is Protein translocase subunit SecF from Rickettsia rickettsii (strain Sheila Smith).